The chain runs to 198 residues: 7-methyl-GTP pyrophosphatase (198 aa).

Asp69 functions as the Proton acceptor in the catalytic mechanism.

The protein belongs to the Maf family. YceF subfamily. The cofactor is a divalent metal cation.

It localises to the cytoplasm. The enzyme catalyses N(7)-methyl-GTP + H2O = N(7)-methyl-GMP + diphosphate + H(+). Nucleoside triphosphate pyrophosphatase that hydrolyzes 7-methyl-GTP (m(7)GTP). May have a dual role in cell division arrest and in preventing the incorporation of modified nucleotides into cellular nucleic acids. In Yersinia pestis bv. Antiqua (strain Antiqua), this protein is 7-methyl-GTP pyrophosphatase.